Here is a 139-residue protein sequence, read N- to C-terminus: Putative lipoprotein LpqV (139 aa).

An N-terminal signal peptide occupies residues 1–25 (MRPSRYAPLLCAMVLALAWLSAVAG). The N-palmitoyl cysteine moiety is linked to residue Cys26. A lipid anchor (S-diacylglycerol cysteine) is attached at Cys26.

It localises to the cell membrane. The chain is Putative lipoprotein LpqV (lpqV) from Mycobacterium bovis (strain ATCC BAA-935 / AF2122/97).